The following is a 123-amino-acid chain: TYMS opposite strand protein (123 aa).

The interval 57–111 is disordered; it reads MRPLPRRIEVRTKRGPQRPAAPERSPQPRLPPSRHPSRRGPRRHLSGCSAPACRI. Positions 91-101 are enriched in basic residues; the sequence is HPSRRGPRRHL.

The chain is TYMS opposite strand protein (TYMSOS) from Homo sapiens (Human).